The chain runs to 291 residues: ATP synthase gamma chain (291 aa).

The protein belongs to the ATPase gamma chain family. F-type ATPases have 2 components, CF(1) - the catalytic core - and CF(0) - the membrane proton channel. CF(1) has five subunits: alpha(3), beta(3), gamma(1), delta(1), epsilon(1). CF(0) has three main subunits: a, b and c.

The protein localises to the cell inner membrane. Its function is as follows. Produces ATP from ADP in the presence of a proton gradient across the membrane. The gamma chain is believed to be important in regulating ATPase activity and the flow of protons through the CF(0) complex. The protein is ATP synthase gamma chain of Rhodopseudomonas palustris (strain HaA2).